The sequence spans 342 residues: MHHHHHPCNRKPFTTIFSFFLLYLNLHNQQIIEARNPSQFTTNPSPDVSIPEIKRHLQQYGYLPQNKESDDVSFEQALVRYQKNLGLPITGKPDSDTLSQILLPRCGFPDDVEPKTAPFHTGKKYVYFPGRPRWTRDVPLKLTYAFSQENLTPYLAPTDIRRVFRRAFGKWASVIPVSFIETEDYVIADIKIGFFNGDHGDGEPFDGVLGVLAHTFSPENGRLHLDKAETWAVDFDEEKSSVAVDLESVAVHEIGHVLGLGHSSVKDAAMYPTLKPRSKKVNLNMDDVVGVQSLYGTNPNFTLNSLLASETSTNLADGSRIRSQGMIYSTLSTVIALCFLNW.

The N-terminal stretch at 1–34 (MHHHHHPCNRKPFTTIFSFFLLYLNLHNQQIIEA) is a signal peptide. Positions 35 to 124 (RNPSQFTTNP…KTAPFHTGKK (90 aa)) are cleaved as a propeptide — activation peptide. The Cysteine switch motif lies at 104–111 (PRCGFPDD). 2 residues coordinate Zn(2+): C106 and H252. Residue E253 is part of the active site. Zn(2+)-binding residues include H256 and H262. N-linked (GlcNAc...) asparagine glycosylation is present at N300. Residue D317 is the site of GPI-anchor amidated aspartate attachment. The propeptide at 318–342 (GSRIRSQGMIYSTLSTVIALCFLNW) is removed in mature form.

It belongs to the peptidase M10A family. Matrix metalloproteinases (MMPs) subfamily. The cofactor is Zn(2+). In terms of tissue distribution, mostly expressed in flowers and stems, and, to a lower extent, in leaves and roots.

It is found in the cell membrane. Repressed by acetohydroxamic acid (AHA). In terms of biological role, matrix metalloproteinases (MMPs) or matrixins may play a role in the degradation and remodeling of the extracellular matrix (ECM) during development or in response to stresses. Active on myelin basic protein (MBP) and, to some extent, on McaPLGLDpaAR-NH(2) (QF24) and beta-casein. The protein is Metalloendoproteinase 4-MMP of Arabidopsis thaliana (Mouse-ear cress).